We begin with the raw amino-acid sequence, 379 residues long: uncharacterized protein (379 aa).

29–36 (GPLNSGKT) lines the ATP pocket.

This sequence belongs to the archaeal ATPase family.

This is an uncharacterized protein from Methanocaldococcus jannaschii (strain ATCC 43067 / DSM 2661 / JAL-1 / JCM 10045 / NBRC 100440) (Methanococcus jannaschii).